The primary structure comprises 335 residues: Acetyl-coenzyme A carboxylase carboxyl transferase subunit alpha (335 aa).

The CoA carboxyltransferase C-terminal domain occupies 40 to 294 (QLETLAARRR…KEAIEKHLNA (255 aa)).

It belongs to the AccA family. In terms of assembly, acetyl-CoA carboxylase is a heterohexamer composed of biotin carboxyl carrier protein (AccB), biotin carboxylase (AccC) and two subunits each of ACCase subunit alpha (AccA) and ACCase subunit beta (AccD).

It localises to the cytoplasm. It catalyses the reaction N(6)-carboxybiotinyl-L-lysyl-[protein] + acetyl-CoA = N(6)-biotinyl-L-lysyl-[protein] + malonyl-CoA. It participates in lipid metabolism; malonyl-CoA biosynthesis; malonyl-CoA from acetyl-CoA: step 1/1. Component of the acetyl coenzyme A carboxylase (ACC) complex. First, biotin carboxylase catalyzes the carboxylation of biotin on its carrier protein (BCCP) and then the CO(2) group is transferred by the carboxyltransferase to acetyl-CoA to form malonyl-CoA. This is Acetyl-coenzyme A carboxylase carboxyl transferase subunit alpha from Prochlorococcus marinus (strain AS9601).